The sequence spans 2281 residues: Protein Ycf2 (2281 aa).

Gly1635 to Ser1642 serves as a coordination point for ATP.

It belongs to the Ycf2 family.

Its subcellular location is the plastid. The protein resides in the chloroplast stroma. In terms of biological role, probable ATPase of unknown function. Its presence in a non-photosynthetic plant (Epifagus virginiana) and experiments in tobacco indicate that it has an essential function which is probably not related to photosynthesis. In Coffea arabica (Arabian coffee), this protein is Protein Ycf2.